A 51-amino-acid polypeptide reads, in one-letter code: Large ribosomal subunit protein eL39 (51 aa).

A disordered region spans residues 32 to 51 (KRRVTRSPARRHWRRQKLKA).

It belongs to the eukaryotic ribosomal protein eL39 family.

This chain is Large ribosomal subunit protein eL39, found in Pyrobaculum calidifontis (strain DSM 21063 / JCM 11548 / VA1).